A 200-amino-acid chain; its full sequence is GTP cyclohydrolase-2 (200 aa).

Residue 50-54 (RVHSE) participates in GTP binding. Zn(2+) contacts are provided by C55, C66, and C68. GTP contacts are provided by residues Q71, 93–95 (EGR), and T115. The active-site Proton acceptor is D127. R129 serves as the catalytic Nucleophile. The GTP site is built by T150 and K155.

It belongs to the GTP cyclohydrolase II family. The cofactor is Zn(2+).

The catalysed reaction is GTP + 4 H2O = 2,5-diamino-6-hydroxy-4-(5-phosphoribosylamino)-pyrimidine + formate + 2 phosphate + 3 H(+). It participates in cofactor biosynthesis; riboflavin biosynthesis; 5-amino-6-(D-ribitylamino)uracil from GTP: step 1/4. Its function is as follows. Catalyzes the conversion of GTP to 2,5-diamino-6-ribosylamino-4(3H)-pyrimidinone 5'-phosphate (DARP), formate and pyrophosphate. This Acinetobacter baumannii (strain AB307-0294) protein is GTP cyclohydrolase-2.